Here is a 763-residue protein sequence, read N- to C-terminus: Cyclin-F (763 aa).

Residues 19–27 (KRRVKRRPR) carry the Nuclear localization signal 1 motif. Residues 28–75 (VLTLLSLPEDVLLYVLECLPAVDILSMREVHPHLRSLVDSHSSVWARA) form the F-box domain. Residues 299-411 (INKTSIFTTQ…EIISALEGKI (113 aa)) enclose the Cyclin N-terminal domain. 2 short sequence motifs (d box) span residues 316-319 (RYIL) and 355-358 (RAKL). 2 disordered regions span residues 574-600 (GSKTKRRREDSIQEDRGSFVTTPTAEL) and 677-763 (KLEN…SDEL). The Nuclear localization signal 2 motif lies at 575–581 (SKTKRRR). Over residues 580-590 (RREDSIQEDRG) the composition is skewed to basic and acidic residues. Residues 589 to 747 (RGSFVTTPTA…LFKASRRQVK (159 aa)) are PEST. Residues 692-710 (SSGYSSVSSGGSPTSSSSP) show a composition bias toward low complexity. Positions 741–751 (ASRRQVKRKNQ) are enriched in basic residues.

It belongs to the cyclin family. Cyclin AB subfamily. As to quaternary structure, component of the SCF(CCNF) complex.

The protein localises to the nucleus. It is found in the cytoplasm. Its subcellular location is the perinuclear region. The protein resides in the cytoskeleton. It localises to the microtubule organizing center. The protein localises to the centrosome. It is found in the centriole. In terms of biological role, substrate recognition component of the SCF(CCNF) E3 ubiquitin-protein ligase complex which mediates the ubiquitination and subsequent proteasomal degradation of target proteins. The SCF(CCNF) E3 ubiquitin-protein ligase complex is an integral component of the ubiquitin proteasome system (UPS) and links proteasome degradation to the cell cycle. Mediates the substrate recognition and the proteasomal degradation of various target proteins during G2 phase involved in the regulation of cell cycle progression and in the maintenance of genome stability. The sequence is that of Cyclin-F (ccnf) from Xenopus tropicalis (Western clawed frog).